A 559-amino-acid chain; its full sequence is Formate--tetrahydrofolate ligase (559 aa).

68-75 lines the ATP pocket; the sequence is TPAGEGKT.

This sequence belongs to the formate--tetrahydrofolate ligase family.

The enzyme catalyses (6S)-5,6,7,8-tetrahydrofolate + formate + ATP = (6R)-10-formyltetrahydrofolate + ADP + phosphate. It participates in one-carbon metabolism; tetrahydrofolate interconversion. The chain is Formate--tetrahydrofolate ligase from Mesorhizobium japonicum (strain LMG 29417 / CECT 9101 / MAFF 303099) (Mesorhizobium loti (strain MAFF 303099)).